Reading from the N-terminus, the 354-residue chain is Malate dehydrogenase 2, peroxisomal (354 aa).

Residues 10-18 form a peroxisomal targeting signal PTS2 region; that stretch reads RIARISAHL. Residues 49 to 55 and Asp75 each bind NAD(+); that span reads GAAGGIG. Residues Arg122 and Arg128 each coordinate substrate. NAD(+) contacts are provided by residues Asn135 and 158–160; that span reads ISN. 2 residues coordinate substrate: Asn160 and Arg194. His218 serves as the catalytic Proton acceptor. NAD(+) is bound at residue Met269.

The protein belongs to the LDH/MDH superfamily. MDH type 1 family. Homodimer. As to expression, expressed in rosette leaves.

Its subcellular location is the peroxisome. It catalyses the reaction (S)-malate + NAD(+) = oxaloacetate + NADH + H(+). Its function is as follows. Catalyzes a reversible NAD-dependent dehydrogenase reaction involved in central metabolism and redox homeostasis between organelle compartments. Peroxisomal NAD-dependent malate dehydrogenase involved in fatty acid beta-oxidation. Reoxidizes NADH from the beta-oxidation and provides NAD for the conversion of fatty acyl-CoA to acetyl-CoA. Does not participate directly in the glyoxylate cycle. Required for maintenance of photosynthetic rates under photorespiratory conditions, and carbon flow during photorespiration. Supplies NADH reductant to the peroxisomal hydroxypyruvate reductase (HPR), which reduces hydroxypyruvate into glycerate in the photorespiratory cycle. The chain is Malate dehydrogenase 2, peroxisomal from Arabidopsis thaliana (Mouse-ear cress).